A 107-amino-acid chain; its full sequence is UPF0145 protein TT_C0892 (107 aa).

This sequence belongs to the UPF0145 family.

The chain is UPF0145 protein TT_C0892 from Thermus thermophilus (strain ATCC BAA-163 / DSM 7039 / HB27).